The following is a 194-amino-acid chain: Holliday junction branch migration complex subunit RuvA (194 aa).

The segment at M1 to A64 is domain I. Residues T65–A143 form a domain II region. A flexible linker region spans residues A144–A147. The interval A147–K194 is domain III.

The protein belongs to the RuvA family. As to quaternary structure, homotetramer. Forms an RuvA(8)-RuvB(12)-Holliday junction (HJ) complex. HJ DNA is sandwiched between 2 RuvA tetramers; dsDNA enters through RuvA and exits via RuvB. An RuvB hexamer assembles on each DNA strand where it exits the tetramer. Each RuvB hexamer is contacted by two RuvA subunits (via domain III) on 2 adjacent RuvB subunits; this complex drives branch migration. In the full resolvosome a probable DNA-RuvA(4)-RuvB(12)-RuvC(2) complex forms which resolves the HJ.

Its subcellular location is the cytoplasm. In terms of biological role, the RuvA-RuvB-RuvC complex processes Holliday junction (HJ) DNA during genetic recombination and DNA repair, while the RuvA-RuvB complex plays an important role in the rescue of blocked DNA replication forks via replication fork reversal (RFR). RuvA specifically binds to HJ cruciform DNA, conferring on it an open structure. The RuvB hexamer acts as an ATP-dependent pump, pulling dsDNA into and through the RuvAB complex. HJ branch migration allows RuvC to scan DNA until it finds its consensus sequence, where it cleaves and resolves the cruciform DNA. The sequence is that of Holliday junction branch migration complex subunit RuvA from Neisseria meningitidis serogroup C (strain 053442).